Consider the following 557-residue polypeptide: Potassium-transporting ATPase potassium-binding subunit (557 aa).

12 helical membrane-spanning segments follow: residues 5-25 (GFLLIATFLLVLMVLARPLGS), 63-83 (LCAILGLNMLGLAVLFFMLLG), 132-152 (GLTVQNFLSAASGIAVIFALI), 170-190 (LLRITLWVLAPVALLIALFFI), 253-273 (FVQMLAIFLIPTALCFAFGEV), 283-303 (LLWAMSVIFVICVGVVMWAEV), 329-349 (VLVSSLFAVVTTAASCGAVIA), 356-376 (ALGGMVPMWLMQIGEVVFGGV), 379-399 (GLYGMMLFVLLAVFIAGLMIG), 416-436 (LTALAILVTPTLVLMGAALAM), 484-504 (LLALCMFVGRFGVIIPVMAIA), and 526-546 (LFVGLLIGTVLLVGALTFIPA).

Belongs to the KdpA family. The system is composed of three essential subunits: KdpA, KdpB and KdpC.

The protein localises to the cell inner membrane. Functionally, part of the high-affinity ATP-driven potassium transport (or Kdp) system, which catalyzes the hydrolysis of ATP coupled with the electrogenic transport of potassium into the cytoplasm. This subunit binds the periplasmic potassium ions and delivers the ions to the membrane domain of KdpB through an intramembrane tunnel. The chain is Potassium-transporting ATPase potassium-binding subunit from Escherichia coli O81 (strain ED1a).